A 119-amino-acid chain; its full sequence is Large ribosomal subunit protein bL20 (119 aa).

Belongs to the bacterial ribosomal protein bL20 family.

Functionally, binds directly to 23S ribosomal RNA and is necessary for the in vitro assembly process of the 50S ribosomal subunit. It is not involved in the protein synthesizing functions of that subunit. The chain is Large ribosomal subunit protein bL20 from Nitrosomonas europaea (strain ATCC 19718 / CIP 103999 / KCTC 2705 / NBRC 14298).